A 335-amino-acid chain; its full sequence is Glyceraldehyde-3-phosphate dehydrogenase (335 aa).

NAD(+) contacts are provided by residues 12-13, Asp-34, and Arg-79; that span reads RI. Residues 150 to 152, Thr-181, 210 to 211, and Arg-233 contribute to the D-glyceraldehyde 3-phosphate site; these read SCT and TG. The Nucleophile role is filled by Cys-151. Asn-315 contacts NAD(+).

Belongs to the glyceraldehyde-3-phosphate dehydrogenase family. As to quaternary structure, homotetramer.

It localises to the cytoplasm. The catalysed reaction is D-glyceraldehyde 3-phosphate + phosphate + NAD(+) = (2R)-3-phospho-glyceroyl phosphate + NADH + H(+). It functions in the pathway carbohydrate degradation; glycolysis; pyruvate from D-glyceraldehyde 3-phosphate: step 1/5. The protein is Glyceraldehyde-3-phosphate dehydrogenase (GPD) of Ogataea parapolymorpha (strain ATCC 26012 / BCRC 20466 / JCM 22074 / NRRL Y-7560 / DL-1) (Yeast).